The primary structure comprises 346 residues: tRNA N6-adenosine threonylcarbamoyltransferase (346 aa).

2 residues coordinate Fe cation: His110 and His114. Substrate is bound by residues 132 to 136, Asp165, Gly178, and Asn274; that span reads LLSGG. Asp298 lines the Fe cation pocket.

Belongs to the KAE1 / TsaD family. It depends on Fe(2+) as a cofactor.

The protein resides in the cytoplasm. It carries out the reaction L-threonylcarbamoyladenylate + adenosine(37) in tRNA = N(6)-L-threonylcarbamoyladenosine(37) in tRNA + AMP + H(+). In terms of biological role, required for the formation of a threonylcarbamoyl group on adenosine at position 37 (t(6)A37) in tRNAs that read codons beginning with adenine. Is involved in the transfer of the threonylcarbamoyl moiety of threonylcarbamoyl-AMP (TC-AMP) to the N6 group of A37, together with TsaE and TsaB. TsaD likely plays a direct catalytic role in this reaction. The chain is tRNA N6-adenosine threonylcarbamoyltransferase from Borreliella burgdorferi (strain ZS7) (Borrelia burgdorferi).